The following is a 469-amino-acid chain: 3-isopropylmalate dehydratase large subunit (469 aa).

[4Fe-4S] cluster-binding residues include Cys349, Cys410, and Cys413.

This sequence belongs to the aconitase/IPM isomerase family. LeuC type 1 subfamily. In terms of assembly, heterodimer of LeuC and LeuD. It depends on [4Fe-4S] cluster as a cofactor.

It carries out the reaction (2R,3S)-3-isopropylmalate = (2S)-2-isopropylmalate. It participates in amino-acid biosynthesis; L-leucine biosynthesis; L-leucine from 3-methyl-2-oxobutanoate: step 2/4. Functionally, catalyzes the isomerization between 2-isopropylmalate and 3-isopropylmalate, via the formation of 2-isopropylmaleate. The chain is 3-isopropylmalate dehydratase large subunit from Azoarcus sp. (strain BH72).